The sequence spans 141 residues: Galactose-6-phosphate isomerase subunit LacA 1 (141 aa).

Belongs to the LacAB/RpiB family. Heteromultimeric protein consisting of LacA and LacB.

The enzyme catalyses aldehydo-D-galactose 6-phosphate = keto-D-tagatose 6-phosphate. It functions in the pathway carbohydrate metabolism; D-galactose 6-phosphate degradation; D-tagatose 6-phosphate from D-galactose 6-phosphate: step 1/1. The sequence is that of Galactose-6-phosphate isomerase subunit LacA 1 from Streptococcus pyogenes serotype M1.